A 273-amino-acid polypeptide reads, in one-letter code: Ribosomal RNA small subunit methyltransferase A (273 aa).

S-adenosyl-L-methionine is bound by residues Asn-18, Leu-20, Gly-45, Glu-66, Asp-91, and Asn-113.

Belongs to the class I-like SAM-binding methyltransferase superfamily. rRNA adenine N(6)-methyltransferase family. RsmA subfamily.

It is found in the cytoplasm. It carries out the reaction adenosine(1518)/adenosine(1519) in 16S rRNA + 4 S-adenosyl-L-methionine = N(6)-dimethyladenosine(1518)/N(6)-dimethyladenosine(1519) in 16S rRNA + 4 S-adenosyl-L-homocysteine + 4 H(+). In terms of biological role, specifically dimethylates two adjacent adenosines (A1518 and A1519) in the loop of a conserved hairpin near the 3'-end of 16S rRNA in the 30S particle. May play a critical role in biogenesis of 30S subunits. The polypeptide is Ribosomal RNA small subunit methyltransferase A (Salmonella newport (strain SL254)).